We begin with the raw amino-acid sequence, 276 residues long: MSYGPLDMYRNPGPSGPQLRDFSSIIQTCSGNIQRISQATAQIKNSMSQLGTKQDSSKLQENLQQLQHSTNQLAKETNELLKELGSLPLPLSTSEQRQQRLQKERLMNDFSAALNNFQAVQRRVSEKEKESIARARAGSRLSAEERQREEQLVSFDSHEEWNQMQSQDDEVAITEQDLELIKERETAIRQLEADILDVNQIFKDLAMMIHDQGDLIDSIEANVESSEVHVERATEQLQRAAYYQKKSRKKMCILVLVLSVIIVILGLIIWLVYKTK.

S2 carries the N-acetylserine modification. Residues 2 to 248 (SYGPLDMYRN…RAAYYQKKSR (247 aa)) are Cytoplasmic-facing. Positions 33–131 (IQRISQATAQ…RRVSEKEKES (99 aa)) form a coiled coil. S139, S142, S218, and S225 each carry phosphoserine. Residues 178 to 240 (LELIKERETA…ERATEQLQRA (63 aa)) enclose the t-SNARE coiled-coil homology domain. The helical; Anchor for type IV membrane protein transmembrane segment at 249–269 (KKMCILVLVLSVIIVILGLII) threads the bilayer. Residues 270-276 (WLVYKTK) are Vesicular-facing.

This sequence belongs to the syntaxin family. In terms of assembly, associates with the BLOC-1 complex. Interacts with BLOC1S6. Interacts with NAPA and SNAP23. Identified in a complex containing STX6, STX12, VAMP4 and VTI1A. Interacts with GRIPAP1. Forms a complex with GRIP1, GRIA2 and NSG1; controls the intracellular fate of AMPAR and the endosomal sorting of the GRIA2 subunit toward recycling and membrane targeting. Interacts with NSG1. Interacts with TPC1. Interacts (via N-terminus) with VPS13B.

The protein localises to the endosome membrane. The protein resides in the golgi apparatus membrane. Its subcellular location is the endomembrane system. It localises to the early endosome membrane. It is found in the recycling endosome membrane. SNARE promoting fusion of transport vesicles with target membranes. Together with SNARE STX6, promotes movement of vesicles from endosomes to the cell membrane, and may therefore function in the endocytic recycling pathway. Through complex formation with GRIP1, GRIA2 and NSG1 controls the intracellular fate of AMPAR and the endosomal sorting of the GRIA2 subunit toward recycling and membrane targeting. The protein is Syntaxin-12 (STX12) of Pongo abelii (Sumatran orangutan).